We begin with the raw amino-acid sequence, 319 residues long: uncharacterized protein (319 aa).

The disordered stretch occupies residues 281–319 (KVERKQRRRDDQNIMRSKLPQQRQNPFCSTERPKRARCD). A compositionally biased stretch (polar residues) spans 299-308 (LPQQRQNPFC).

It localises to the cytoplasm. Its subcellular location is the nucleus. This is an uncharacterized protein from Saccharomyces cerevisiae (strain ATCC 204508 / S288c) (Baker's yeast).